We begin with the raw amino-acid sequence, 199 residues long: Gamma-glutamylcyclotransferase 2-3 (199 aa).

5–10 (VFGYGS) is a substrate binding site. Catalysis depends on glutamate 86, which acts as the Proton acceptor.

The protein belongs to the gamma-glutamylcyclotransferase family. Requires Mn(2+) as cofactor.

The protein localises to the cytoplasm. The catalysed reaction is glutathione = L-cysteinylglycine + 5-oxo-L-proline. In terms of biological role, converts GSH to 5-oxoproline and cysteine-glycine (Cys-Gly) dipeptide in vitro and plays a significant role in glutathione (GSH) homeostasis. Has no activity towards gamma-glutamyl-L-cysteine but possesses very low activity towards gamma-glutamyl-L-alanine. This is Gamma-glutamylcyclotransferase 2-3 from Arabidopsis thaliana (Mouse-ear cress).